We begin with the raw amino-acid sequence, 93 residues long: Acylphosphatase (93 aa).

A disulfide bridge links Cys5 with Cys49. The Acylphosphatase-like domain maps to 5–93 (CTIAWIYGRV…ETLTDFSIRY (89 aa)). Residues Arg20 and Asn38 contribute to the active site.

It belongs to the acylphosphatase family.

It carries out the reaction an acyl phosphate + H2O = a carboxylate + phosphate + H(+). This chain is Acylphosphatase, found in Salmonella arizonae (strain ATCC BAA-731 / CDC346-86 / RSK2980).